Consider the following 535-residue polypeptide: uncharacterized protein (535 aa).

6 consecutive transmembrane segments (helical) span residues 55-75, 82-102, 115-135, 143-163, 201-221, and 346-366; these read LITIICHLFLLLNIFISIPII, FMPVGFTALAAILLAMQIMFV, IICFLLAIDVLVVFLSPILRH, AFVLWAFLMSLWIVITDLMLF, STILSVILTILTIHTLVTLIM, and VSGPYVLVAHGIGGVYSNVFA.

The protein localises to the membrane. This is an uncharacterized protein from Schizosaccharomyces pombe (strain 972 / ATCC 24843) (Fission yeast).